The sequence spans 152 residues: Ribonuclease H (152 aa).

Positions 1-142 (MDSKVVIYTD…ADKLAVQGRE (142 aa)) constitute an RNase H type-1 domain. 4 residues coordinate Mg(2+): aspartate 10, glutamate 48, aspartate 70, and aspartate 134.

This sequence belongs to the RNase H family. In terms of assembly, monomer. The cofactor is Mg(2+).

Its subcellular location is the cytoplasm. The catalysed reaction is Endonucleolytic cleavage to 5'-phosphomonoester.. In terms of biological role, endonuclease that specifically degrades the RNA of RNA-DNA hybrids. The sequence is that of Ribonuclease H from Rickettsia felis (strain ATCC VR-1525 / URRWXCal2) (Rickettsia azadi).